A 254-amino-acid polypeptide reads, in one-letter code: Hydroxypyruvate/pyruvate aldolase (254 aa).

Histidine 47 functions as the Proton acceptor in the catalytic mechanism. Residues glutamate 151 and aspartate 177 each contribute to the a divalent metal cation site.

It belongs to the HpcH/HpaI aldolase family. A divalent metal cation is required as a cofactor.

It carries out the reaction D-glyceraldehyde + pyruvate = 2-dehydro-3-deoxy-L-galactonate. Aldolase which can catalyze in vitro the aldolisation reaction between hydroxypyruvate (HPA) or pyruvate (PA) and D-glyceraldehyde (D-GA). The condensation of pyruvate and D-glyceraldehyde produces 2-dehydro-3-deoxy-L-galactonate as the major product. Has weak activity with hydroxypyruvate and D-glyceraldehyde. In Chromohalobacter salexigens (strain ATCC BAA-138 / DSM 3043 / CIP 106854 / NCIMB 13768 / 1H11), this protein is Hydroxypyruvate/pyruvate aldolase.